The primary structure comprises 428 residues: 3-phosphoshikimate 1-carboxyvinyltransferase (428 aa).

3-phosphoshikimate is bound by residues Lys22, Ser23, and Arg27. Lys22 contributes to the phosphoenolpyruvate binding site. Phosphoenolpyruvate-binding residues include Gly96 and Arg124. Positions 170, 171, 172, 198, 314, 337, and 341 each coordinate 3-phosphoshikimate. A phosphoenolpyruvate-binding site is contributed by Gln172. Asp314 acts as the Proton acceptor in catalysis. Residues Arg345, Arg387, and Lys412 each coordinate phosphoenolpyruvate.

The protein belongs to the EPSP synthase family. Monomer.

The protein resides in the cytoplasm. The catalysed reaction is 3-phosphoshikimate + phosphoenolpyruvate = 5-O-(1-carboxyvinyl)-3-phosphoshikimate + phosphate. The protein operates within metabolic intermediate biosynthesis; chorismate biosynthesis; chorismate from D-erythrose 4-phosphate and phosphoenolpyruvate: step 6/7. Catalyzes the transfer of the enolpyruvyl moiety of phosphoenolpyruvate (PEP) to the 5-hydroxyl of shikimate-3-phosphate (S3P) to produce enolpyruvyl shikimate-3-phosphate and inorganic phosphate. This chain is 3-phosphoshikimate 1-carboxyvinyltransferase, found in Shewanella amazonensis (strain ATCC BAA-1098 / SB2B).